The sequence spans 308 residues: Sulfate adenylyltransferase subunit 2 (308 aa).

It belongs to the PAPS reductase family. CysD subfamily. In terms of assembly, heterodimer composed of CysD, the smaller subunit, and CysN.

The enzyme catalyses sulfate + ATP + H(+) = adenosine 5'-phosphosulfate + diphosphate. It functions in the pathway sulfur metabolism; hydrogen sulfide biosynthesis; sulfite from sulfate: step 1/3. Functionally, with CysN forms the ATP sulfurylase (ATPS) that catalyzes the adenylation of sulfate producing adenosine 5'-phosphosulfate (APS) and diphosphate, the first enzymatic step in sulfur assimilation pathway. APS synthesis involves the formation of a high-energy phosphoric-sulfuric acid anhydride bond driven by GTP hydrolysis by CysN coupled to ATP hydrolysis by CysD. The protein is Sulfate adenylyltransferase subunit 2 of Chromobacterium violaceum (strain ATCC 12472 / DSM 30191 / JCM 1249 / CCUG 213 / NBRC 12614 / NCIMB 9131 / NCTC 9757 / MK).